The following is a 94-amino-acid chain: Histone-like DNA-binding protein (94 aa).

It belongs to the bacterial histone-like protein family.

This chain is Histone-like DNA-binding protein, found in Rickettsia bellii (strain RML369-C).